The primary structure comprises 427 residues: Glutamate-1-semialdehyde 2,1-aminomutase 2 (427 aa).

An N6-(pyridoxal phosphate)lysine modification is found at lysine 267.

This sequence belongs to the class-III pyridoxal-phosphate-dependent aminotransferase family. HemL subfamily. As to quaternary structure, homodimer. Requires pyridoxal 5'-phosphate as cofactor.

The protein localises to the cytoplasm. The catalysed reaction is (S)-4-amino-5-oxopentanoate = 5-aminolevulinate. It participates in porphyrin-containing compound metabolism; protoporphyrin-IX biosynthesis; 5-aminolevulinate from L-glutamyl-tRNA(Glu): step 2/2. The polypeptide is Glutamate-1-semialdehyde 2,1-aminomutase 2 (Staphylococcus saprophyticus subsp. saprophyticus (strain ATCC 15305 / DSM 20229 / NCIMB 8711 / NCTC 7292 / S-41)).